Consider the following 306-residue polypeptide: ADP-polyphosphate phosphotransferase 2 (306 aa).

It belongs to the polyphosphate kinase 2 (PPK2) family. Class I subfamily.

The enzyme catalyses [phosphate](n) + ATP = [phosphate](n+1) + ADP. It carries out the reaction [phosphate](n) + GTP = [phosphate](n+1) + GDP. In terms of biological role, uses inorganic polyphosphate (polyP) as a donor to convert ADP to ATP. Can also convert GDP to GTP, with lower efficiency. This chain is ADP-polyphosphate phosphotransferase 2, found in Rhizobium meliloti (strain 1021) (Ensifer meliloti).